An 80-amino-acid polypeptide reads, in one-letter code: UPF0346 protein LSEI_1394 (80 aa).

Belongs to the UPF0346 family.

The protein is UPF0346 protein LSEI_1394 of Lacticaseibacillus paracasei (strain ATCC 334 / BCRC 17002 / CCUG 31169 / CIP 107868 / KCTC 3260 / NRRL B-441) (Lactobacillus paracasei).